The following is a 182-amino-acid chain: Large ribosomal subunit protein bL19m (182 aa).

The N-terminal 21 residues, Met-1–Gly-21, are a transit peptide targeting the mitochondrion.

The protein belongs to the bacterial ribosomal protein bL19 family. Component of the mitochondrial large ribosomal subunit (mt-LSU). Mature yeast 74S mitochondrial ribosomes consist of a small (37S) and a large (54S) subunit. The 37S small subunit contains a 15S ribosomal RNA (15S mt-rRNA) and at least 32 different proteins. The 54S large subunit contains a 21S rRNA (21S mt-rRNA) and at least 45 different proteins.

The protein localises to the mitochondrion. Component of the mitochondrial ribosome (mitoribosome), a dedicated translation machinery responsible for the synthesis of mitochondrial genome-encoded proteins, including at least some of the essential transmembrane subunits of the mitochondrial respiratory chain. The mitoribosomes are attached to the mitochondrial inner membrane and translation products are cotranslationally integrated into the membrane. bL19m is essential for respiration. This is Large ribosomal subunit protein bL19m (img1) from Schizosaccharomyces pombe (strain 972 / ATCC 24843) (Fission yeast).